Reading from the N-terminus, the 330-residue chain is 3'-5' exonuclease (330 aa).

Residues 1–92 are disordered; that stretch reads MDQYLIKMST…DGTPSPEKEI (92 aa). Basic and acidic residues-rich tracts occupy residues 27-39 and 48-66; these read NTTR…KEKI and KDTP…ENPP. Residues serine 79 and serine 87 each carry the phosphoserine modification. The region spanning 117–289 is the 3'-5' exonuclease domain; sequence SADEVMQWVE…IGQVIYRDIE (173 aa). Mg(2+) contacts are provided by aspartate 139, glutamate 141, and aspartate 277.

It belongs to the WRNexo family.

Its subcellular location is the nucleus. Functionally, has exonuclease activity on both single-stranded and duplex templates bearing overhangs, but not blunt ended duplex DNA, and cleaves in a 3'-5' direction. Essential for the formation of DNA replication focal centers. Has an important role in maintaining genome stability. The chain is 3'-5' exonuclease from Drosophila virilis (Fruit fly).